Here is a 72-residue protein sequence, read N- to C-terminus: Translation initiation factor IF-1 (72 aa).

One can recognise an S1-like domain in the interval 1–72; that stretch reads MSKDDVIEMQ…TRGRITWRAK (72 aa).

The protein belongs to the IF-1 family. As to quaternary structure, component of the 30S ribosomal translation pre-initiation complex which assembles on the 30S ribosome in the order IF-2 and IF-3, IF-1 and N-formylmethionyl-tRNA(fMet); mRNA recruitment can occur at any time during PIC assembly.

The protein resides in the cytoplasm. Its function is as follows. One of the essential components for the initiation of protein synthesis. Stabilizes the binding of IF-2 and IF-3 on the 30S subunit to which N-formylmethionyl-tRNA(fMet) subsequently binds. Helps modulate mRNA selection, yielding the 30S pre-initiation complex (PIC). Upon addition of the 50S ribosomal subunit IF-1, IF-2 and IF-3 are released leaving the mature 70S translation initiation complex. The sequence is that of Translation initiation factor IF-1 from Clostridium kluyveri (strain ATCC 8527 / DSM 555 / NBRC 12016 / NCIMB 10680 / K1).